The primary structure comprises 308 residues: Putative cathepsin L 3 (308 aa).

The first 21 residues, 1–21 (MKQFLTAAIVTLLMTAGYYHL), serve as a signal peptide directing secretion. Residues 22–110 (QEDDTNDFER…GASLPEVQLE (89 aa)) constitute a propeptide, activation peptide. 2 disulfide bridges follow: C129–C170 and C254–C298. Residues H261 and N278 contribute to the active site.

This sequence belongs to the peptidase C1 family.

It localises to the secreted. It catalyses the reaction Specificity close to that of papain. As compared to cathepsin B, cathepsin L exhibits higher activity toward protein substrates, but has little activity on Z-Arg-Arg-NHMec, and no peptidyl-dipeptidase activity.. May be involved in extracellular digestion. This chain is Putative cathepsin L 3, found in Paramecium tetraurelia.